Consider the following 619-residue polypeptide: Dihydroxy-acid dehydratase (619 aa).

Aspartate 81 contacts Mg(2+). Cysteine 122 contributes to the [2Fe-2S] cluster binding site. Residues aspartate 123 and lysine 124 each contribute to the Mg(2+) site. N6-carboxylysine is present on lysine 124. [2Fe-2S] cluster is bound at residue cysteine 198. Glutamate 494 is a binding site for Mg(2+). Serine 520 serves as the catalytic Proton acceptor.

The protein belongs to the IlvD/Edd family. Homodimer. [2Fe-2S] cluster is required as a cofactor. Requires Mg(2+) as cofactor.

It catalyses the reaction (2R)-2,3-dihydroxy-3-methylbutanoate = 3-methyl-2-oxobutanoate + H2O. The enzyme catalyses (2R,3R)-2,3-dihydroxy-3-methylpentanoate = (S)-3-methyl-2-oxopentanoate + H2O. The protein operates within amino-acid biosynthesis; L-isoleucine biosynthesis; L-isoleucine from 2-oxobutanoate: step 3/4. Its pathway is amino-acid biosynthesis; L-valine biosynthesis; L-valine from pyruvate: step 3/4. In terms of biological role, functions in the biosynthesis of branched-chain amino acids. Catalyzes the dehydration of (2R,3R)-2,3-dihydroxy-3-methylpentanoate (2,3-dihydroxy-3-methylvalerate) into 2-oxo-3-methylpentanoate (2-oxo-3-methylvalerate) and of (2R)-2,3-dihydroxy-3-methylbutanoate (2,3-dihydroxyisovalerate) into 2-oxo-3-methylbutanoate (2-oxoisovalerate), the penultimate precursor to L-isoleucine and L-valine, respectively. This is Dihydroxy-acid dehydratase from Neisseria meningitidis serogroup A / serotype 4A (strain DSM 15465 / Z2491).